Here is a 100-residue protein sequence, read N- to C-terminus: Urease subunit gamma (100 aa).

The protein belongs to the urease gamma subunit family. As to quaternary structure, heterotrimer of UreA (gamma), UreB (beta) and UreC (alpha) subunits. Three heterotrimers associate to form the active enzyme.

The protein resides in the cytoplasm. It catalyses the reaction urea + 2 H2O + H(+) = hydrogencarbonate + 2 NH4(+). Its pathway is nitrogen metabolism; urea degradation; CO(2) and NH(3) from urea (urease route): step 1/1. The chain is Urease subunit gamma from Aliivibrio fischeri (strain ATCC 700601 / ES114) (Vibrio fischeri).